Reading from the N-terminus, the 938-residue chain is Isoleucine--tRNA ligase (938 aa).

A 'HIGH' region motif is present at residues 58–68 (PYANGSIHIGH). An L-isoleucyl-5'-AMP-binding site is contributed by Glu-561. A 'KMSKS' region motif is present at residues 602-606 (KMSKS). Lys-605 provides a ligand contact to ATP. Positions 901, 904, 921, and 924 each coordinate Zn(2+).

This sequence belongs to the class-I aminoacyl-tRNA synthetase family. IleS type 1 subfamily. In terms of assembly, monomer. It depends on Zn(2+) as a cofactor.

It localises to the cytoplasm. The enzyme catalyses tRNA(Ile) + L-isoleucine + ATP = L-isoleucyl-tRNA(Ile) + AMP + diphosphate. Its function is as follows. Catalyzes the attachment of isoleucine to tRNA(Ile). As IleRS can inadvertently accommodate and process structurally similar amino acids such as valine, to avoid such errors it has two additional distinct tRNA(Ile)-dependent editing activities. One activity is designated as 'pretransfer' editing and involves the hydrolysis of activated Val-AMP. The other activity is designated 'posttransfer' editing and involves deacylation of mischarged Val-tRNA(Ile). This Baumannia cicadellinicola subsp. Homalodisca coagulata protein is Isoleucine--tRNA ligase.